We begin with the raw amino-acid sequence, 463 residues long: Xanthone prenyltransferase B (463 aa).

Belongs to the tryptophan dimethylallyltransferase family.

It participates in secondary metabolite biosynthesis. Its activity is regulated as follows. Mn(2+) and Co(2+) strongly enhance prenylation activity. Its function is as follows. Dehydrogenase involved in the conversion of monodictyphenone to the prenyl xanthones such as emericellin, shamixanthone and epishamixanthone. Monodictyphenone is first converted to variecoxanthone A via a paeciloxanthone intermediate by the consecutive actions of the FAD-dependent monooxygenase mdpD and the xanthone prenyltransferase xptB. XptB catalyzes regular O-prenylation at the hydroxy group of C-7 of the xanthone ring. Variecoxanthone A is further prenylated to emericellin by xptA before being reduced to shamixanthone and epishamixanthone by the dehydrogenase xptC. This chain is Xanthone prenyltransferase B, found in Emericella nidulans (strain FGSC A4 / ATCC 38163 / CBS 112.46 / NRRL 194 / M139) (Aspergillus nidulans).